The primary structure comprises 353 residues: Delta-aminolevulinic acid dehydratase (353 aa).

Lys-221 serves as the catalytic Schiff-base intermediate with substrate. Arg-231 and Lys-244 together coordinate 5-aminolevulinate. Glu-260 provides a ligand contact to Mg(2+). Lys-275 acts as the Schiff-base intermediate with substrate in catalysis. Residues Ser-301 and Tyr-340 each coordinate 5-aminolevulinate.

It belongs to the ALAD family. As to quaternary structure, homooctamer. It depends on Mg(2+) as a cofactor.

It catalyses the reaction 2 5-aminolevulinate = porphobilinogen + 2 H2O + H(+). It participates in porphyrin-containing compound metabolism; protoporphyrin-IX biosynthesis; coproporphyrinogen-III from 5-aminolevulinate: step 1/4. Functionally, catalyzes an early step in the biosynthesis of tetrapyrroles. Binds two molecules of 5-aminolevulinate per subunit, each at a distinct site, and catalyzes their condensation to form porphobilinogen. Required for nodule development. The protein is Delta-aminolevulinic acid dehydratase (hemB) of Bradyrhizobium diazoefficiens (strain JCM 10833 / BCRC 13528 / IAM 13628 / NBRC 14792 / USDA 110).